A 239-amino-acid chain; its full sequence is Type III pantothenate kinase (239 aa).

Asp-6–Lys-13 is a binding site for ATP. Substrate-binding positions include Tyr-87 and Gly-94 to Arg-97. The Proton acceptor role is filled by Asp-96. ATP is bound at residue Thr-119. Ser-169 is a substrate binding site.

The protein belongs to the type III pantothenate kinase family. As to quaternary structure, homodimer. NH4(+) serves as cofactor. It depends on K(+) as a cofactor.

It is found in the cytoplasm. It catalyses the reaction (R)-pantothenate + ATP = (R)-4'-phosphopantothenate + ADP + H(+). It functions in the pathway cofactor biosynthesis; coenzyme A biosynthesis; CoA from (R)-pantothenate: step 1/5. Its function is as follows. Catalyzes the phosphorylation of pantothenate (Pan), the first step in CoA biosynthesis. This Laribacter hongkongensis (strain HLHK9) protein is Type III pantothenate kinase.